The following is a 217-amino-acid chain: Uracil-DNA glycosylase (217 aa).

Aspartate 62 (proton acceptor) is an active-site residue.

The protein belongs to the uracil-DNA glycosylase (UDG) superfamily. UNG family.

Its subcellular location is the cytoplasm. It carries out the reaction Hydrolyzes single-stranded DNA or mismatched double-stranded DNA and polynucleotides, releasing free uracil.. In terms of biological role, excises uracil residues from the DNA which can arise as a result of misincorporation of dUMP residues by DNA polymerase or due to deamination of cytosine. The chain is Uracil-DNA glycosylase from Streptococcus thermophilus (strain ATCC BAA-491 / LMD-9).